We begin with the raw amino-acid sequence, 984 residues long: PAX-interacting protein 1 (984 aa).

2 consecutive BRCT domains span residues 8 to 93 (VPEE…GFSP) and 94 to 183 (ESCQ…LYHP). Positions 94 to 183 (ESCQIFFGIT…TRKDEALYHP (90 aa)) are interaction with PAGR1. Disordered regions lie at residues 187–271 (VYEE…PAEV) and 417–509 (QQHL…LFGH). Over residues 188–208 (YEEEEEEEEEEEGAGNEEPDS) the composition is skewed to acidic residues. The span at 217–229 (KSSPASSQEGSPS) shows a compositional bias: low complexity. 2 positions are modified to phosphoserine: Ser227 and Ser235. Residues 424–454 (PYPPPPPHPFPPPPAHPHQFPQPPLQRPQPP) show a composition bias toward pro residues. The span at 455–485 (LQQQQLSHLQQQQLQHLQRLQQMQPTPTAQL) shows a compositional bias: low complexity. The span at 486-499 (PGPPAQALQPPPPQ) shows a compositional bias: pro residues. Positions 505–984 (PLFGHDPAVE…TLDYESYKFN (480 aa)) are interaction with TP53BP1. BRCT domains lie at 516 to 609 (PEEG…RALH) and 616 to 704 (PGGK…TQYG). The short motif at 583–600 (RKRCITAHWLNTVLKKKK) is the Nuclear localization signal element. Positions 750-771 (KQNEVTNVQPSSKRARIEDIPP) are disordered. A compositionally biased stretch (polar residues) spans 752 to 761 (NEVTNVQPSS). 2 consecutive BRCT domains span residues 781 to 862 (TPFV…NYLL) and 883 to 924 (HASP…QPSF).

Interacts with the C-terminal transactivation domain of PAX2. Forms a constitutive complex with PAGR1 independently of the MLL2/MLL3 complex. Interacts with TP53BP1 (when phosphorylated at the N-terminus by ATM). Interacts with HLTF. Component of the KMT2 family MLL2/MLL3 complex (also named ASCOM complex), at least composed of the HMTs KMT2D and/or KMT2C, the common subunits ASH2L, RBBP5, WDR5 and DPY30, and the complex type-specific subunits PAXIP1/PTIP, PAGR1, NCOA6 and KDM6A; required for the association of PAGR1 with the MLL2/MLL3 complex. Interacts with NUPR1; this interaction prevents PAXIP1 inhibition of PAX2 transcription factor activity.

Its subcellular location is the nucleus matrix. It is found in the chromosome. Functionally, involved in DNA damage response and in transcriptional regulation through histone methyltransferase (HMT) complexes. Plays a role in early development. In DNA damage response is required for cell survival after ionizing radiation. In vitro shown to be involved in the homologous recombination mechanism for the repair of double-strand breaks (DSBs). Its localization to DNA damage foci requires RNF8 and UBE2N. Recruits TP53BP1 to DNA damage foci and, at least in particular repair processes, effective DNA damage response appears to require the association with TP53BP1 phosphorylated by ATM at 'Ser-25'. Together with TP53BP1 regulates ATM association. Proposed to recruit PAGR1 to sites of DNA damage and the PAGR1:PAXIP1 complex is required for cell survival in response to DNA damage; the function is probably independent of MLL-containing histone methyltransferase (HMT) complexes. However, this function has been questioned. Promotes ubiquitination of PCNA following UV irradiation and may regulate recruitment of polymerase eta and RAD51 to chromatin after DNA damage. Proposed to be involved in transcriptional regulation by linking MLL-containing histone methyltransferase (HMT) complexes to gene promoters by interacting with promoter-bound transcription factors such as PAX2. Associates with gene promoters that are known to be regulated by KMT2D/MLL2. During immunoglobulin class switching in activated B-cells is involved in trimethylation of histone H3 at 'Lys-4' and in transcription initiation of downstream switch regions at the immunoglobulin heavy-chain (Igh) locus; this function appears to involve the recruitment of MLL-containing HMT complexes. Conflictingly, its function in transcriptional regulation during immunoglobulin class switching is reported to be independent of the MLL2/MLL3 complex. The chain is PAX-interacting protein 1 (PAXIP1) from Bos taurus (Bovine).